The primary structure comprises 223 residues: MSDLKTTKDTLVSTLFELSKAAQDAANAAIEFYKVASGGSDHVSAEQLKAVSEALNTVATLSSGNGAKIEATESKKKRKQEKDPNAPKKPLTMFFQFSYDLRKKIGIERKKKDLPSLSAIDMNSMIKDRWDSISEAEKAGYKKRYDDAMIIYNIEKKKYEESLKDGSAYYPPPSVQTPIVGHGIEQDFDDDATDIVSSPEEPKKKKKKTEKKEKKKKSGHGSP.

Disordered stretches follow at residues 69-89 (IEATESKKKRKQEKDPNAPKK) and 165-223 (DGSA…HGSP). A compositionally biased stretch (basic and acidic residues) spans 70–86 (EATESKKKRKQEKDPNA). Residues 87 to 160 (PKKPLTMFFQ…IYNIEKKKYE (74 aa)) constitute a DNA-binding region (HMG box). The segment covering 204–223 (KKKKKTEKKEKKKKSGHGSP) has biased composition (basic residues).

It is found in the nucleus. Functionally, transcription factor that binds upstream of hexose and ergosterol metabolism, as well as cell cycle genes. Activates pseudohyphal growth. The protein is Transcriptional regulator HMO1 (HMO1) of Candida albicans (strain SC5314 / ATCC MYA-2876) (Yeast).